A 601-amino-acid polypeptide reads, in one-letter code: Sulfite reductase [NADPH] flavoprotein alpha-component (601 aa).

One can recognise a Flavodoxin-like domain in the interval 64–202 (ITLISASQTG…AAQEWRARVV (139 aa)). FMN is bound by residues 70 to 75 (SQTGNA), 117 to 120 (STQG), and 153 to 162 (LGDTSYEFFC). The region spanning 236-450 (EAPLSASLAV…IEHNDNFRLP (215 aa)) is the FAD-binding FR-type domain. FAD is bound by residues threonine 324, alanine 358, 388–391 (RLYS), 406–408 (TVG), tyrosine 412, and 421–424 (GGAS). Residues 521-522 (SR), 527-531 (KIYVQ), and aspartate 563 each bind NADP(+). Tyrosine 601 is a binding site for FAD.

It belongs to the NADPH-dependent sulphite reductase flavoprotein subunit CysJ family. In the N-terminal section; belongs to the flavodoxin family. This sequence in the C-terminal section; belongs to the flavoprotein pyridine nucleotide cytochrome reductase family. As to quaternary structure, alpha(8)-beta(8). The alpha component is a flavoprotein, the beta component is a hemoprotein. It depends on FAD as a cofactor. The cofactor is FMN.

It carries out the reaction hydrogen sulfide + 3 NADP(+) + 3 H2O = sulfite + 3 NADPH + 4 H(+). It participates in sulfur metabolism; hydrogen sulfide biosynthesis; hydrogen sulfide from sulfite (NADPH route): step 1/1. Functionally, component of the sulfite reductase complex that catalyzes the 6-electron reduction of sulfite to sulfide. This is one of several activities required for the biosynthesis of L-cysteine from sulfate. The flavoprotein component catalyzes the electron flow from NADPH -&gt; FAD -&gt; FMN to the hemoprotein component. The chain is Sulfite reductase [NADPH] flavoprotein alpha-component from Citrobacter koseri (strain ATCC BAA-895 / CDC 4225-83 / SGSC4696).